The sequence spans 477 residues: Pentatricopeptide repeat-containing protein At5g47360 (477 aa).

9 PPR repeats span residues 129-163, 164-198, 199-233, 234-264, 273-307, 308-343, 344-378, 379-413, and 416-450; these read NVKTMRIVLTLCNQANLADEALWVLRKFPEFNVCA, DTVAYNLVIRLFADKGDLNIADMLIKEMDCVGLYP, DVITYTSMINGYCNAGKIDDAWRLAKEMSKHDCVL, NSVTYSRILEGVCKSGDMERALELLAEMEKE, NAVTYTLVIQAFCEKRRVEEALLVLDRMGNRGCMP, NRVTACVLIQGVLENDEDVKALSKLIDKLVKLGGVS, LSECFSSATVSLIRMKRWEEAEKIFRLMLVRGVRP, DGLACSHVFRELCLLERYLDCFLLYQEIEKKDVKS, and DSDIHAVLLLGLCQQGNSWEAAKLAKSMLDKKMRL.

The protein belongs to the PPR family. P subfamily.

The protein is Pentatricopeptide repeat-containing protein At5g47360 of Arabidopsis thaliana (Mouse-ear cress).